We begin with the raw amino-acid sequence, 540 residues long: Growth factor receptor-bound protein 14 (540 aa).

Residues 1–23 are disordered; the sequence is MTTSLQDGQSAAGRAAARDSPLA. Threonine 2 carries the post-translational modification N-acetylthreonine. The Ras-associating domain occupies 106–192; that stretch reads KKQVIKVYSE…NKLYFRKNYA (87 aa). One can recognise a PH domain in the interval 234 to 342; sequence YPEIHGFLHA…WVTAIRLLKY (109 aa). Phosphoserine is present on residues serine 372 and serine 375. Positions 439-535 constitute an SH2 domain; that stretch reads WFHHKMSREE…VLPCKLKHYC (97 aa).

This sequence belongs to the GRB7/10/14 family. In terms of assembly, interacts with the cytoplasmic domain of the autophosphorylated insulin receptor, through the SH2 domain. Interacts with GRB14 (via BPS domain); this interaction protects the tyrosines in the activation loop on INSR from dephosphorylation. Binds to the ankyrin repeat region of TNKS2 via its N-terminus. Interacts with activated NRAS. Interacts (via SH2 domain) with TEK/TIE2 (tyrosine phosphorylated). In terms of processing, phosphorylated on serine residues. Phosphorylated on tyrosine residues by TEK/TIE2.

It localises to the cytoplasm. Its subcellular location is the endosome membrane. Adapter protein which modulates coupling of cell surface receptor kinases with specific signaling pathways. Binds to, and suppresses signals from, the activated insulin receptor (INSR). Potent inhibitor of insulin-stimulated MAPK3 phosphorylation. Plays a critical role regulating PDPK1 membrane translocation in response to insulin stimulation and serves as an adapter protein to recruit PDPK1 to activated insulin receptor, thus promoting PKB/AKT1 phosphorylation and transduction of the insulin signal. This is Growth factor receptor-bound protein 14 (GRB14) from Bos taurus (Bovine).